A 217-amino-acid chain; its full sequence is Uridylate kinase (217 aa).

6–10 (KLSGR) is an ATP binding site. Glycine 38 is a UMP binding site. ATP-binding residues include glycine 39 and arginine 43. UMP-binding positions include aspartate 60 and 107-113 (FQPGQST). ATP contacts are provided by asparagine 134, tyrosine 139, and aspartate 142.

This sequence belongs to the UMP kinase family. In terms of assembly, homohexamer.

It localises to the cytoplasm. The catalysed reaction is UMP + ATP = UDP + ADP. Its pathway is pyrimidine metabolism; CTP biosynthesis via de novo pathway; UDP from UMP (UMPK route): step 1/1. Its activity is regulated as follows. Inhibited by UTP. Catalyzes the reversible phosphorylation of UMP to UDP. This chain is Uridylate kinase, found in Pyrobaculum islandicum (strain DSM 4184 / JCM 9189 / GEO3).